A 520-amino-acid chain; its full sequence is MAPVALLSVSDKSGLVPLAEALHRTHGYQLLSSGGTAKVLEQAGLPVTRVSDHTGAPEILGGRVKTLHPRVHGGILAKRGDASHQADLEQQNIAPIDMVVVNLYPFRETIARPDVTWDQAIENIDIGGPAMVRAAAKNHADVAVLTSPDQYDRLLTAMAESGGSVPSALRRQLALEAFNHTASYDTAIGRWMAEQATAKGCPWLEAVPLRQTLRYGENPHQKARWFSHPKQGWGGAIQLQGKELSTNNLLDLEAALATVREFGYGADGSAPASQPAAVVVKHTNPCGVAVGASMPAALTRALDADRVSAFGGIIAMNDVVEATAARELTSLFLECVVAPGFTPEAREVLAAKANLRLLELAPQAIDVAGPDHVRSILGGLLVQDLDDQAITPTDWTVASQRPPTPQEKLDLEFAWRLVRHVRSNAIVVAKDGQSLGVGAGQMNRVGSARIALEAAGEKAQGAVLASDGFFPFDDTVRLAASQGITAVIHPGGSMRDGDSIKACDELGLAMQLTGRRHFLH.

Residues 1-146 (MAPVALLSVS…KNHADVAVLT (146 aa)) enclose the MGS-like domain.

The protein belongs to the PurH family.

It carries out the reaction (6R)-10-formyltetrahydrofolate + 5-amino-1-(5-phospho-beta-D-ribosyl)imidazole-4-carboxamide = 5-formamido-1-(5-phospho-D-ribosyl)imidazole-4-carboxamide + (6S)-5,6,7,8-tetrahydrofolate. The enzyme catalyses IMP + H2O = 5-formamido-1-(5-phospho-D-ribosyl)imidazole-4-carboxamide. Its pathway is purine metabolism; IMP biosynthesis via de novo pathway; 5-formamido-1-(5-phospho-D-ribosyl)imidazole-4-carboxamide from 5-amino-1-(5-phospho-D-ribosyl)imidazole-4-carboxamide (10-formyl THF route): step 1/1. It participates in purine metabolism; IMP biosynthesis via de novo pathway; IMP from 5-formamido-1-(5-phospho-D-ribosyl)imidazole-4-carboxamide: step 1/1. The protein is Bifunctional purine biosynthesis protein PurH of Synechococcus sp. (strain CC9605).